Reading from the N-terminus, the 223-residue chain is Deoxyribose-phosphate aldolase (223 aa).

Catalysis depends on aspartate 89, which acts as the Proton donor/acceptor. Catalysis depends on lysine 152, which acts as the Schiff-base intermediate with acetaldehyde. Lysine 181 acts as the Proton donor/acceptor in catalysis.

It belongs to the DeoC/FbaB aldolase family. DeoC type 1 subfamily.

It is found in the cytoplasm. It carries out the reaction 2-deoxy-D-ribose 5-phosphate = D-glyceraldehyde 3-phosphate + acetaldehyde. It functions in the pathway carbohydrate degradation; 2-deoxy-D-ribose 1-phosphate degradation; D-glyceraldehyde 3-phosphate and acetaldehyde from 2-deoxy-alpha-D-ribose 1-phosphate: step 2/2. In terms of biological role, catalyzes a reversible aldol reaction between acetaldehyde and D-glyceraldehyde 3-phosphate to generate 2-deoxy-D-ribose 5-phosphate. The sequence is that of Deoxyribose-phosphate aldolase from Bacillus cereus (strain Q1).